Consider the following 892-residue polypeptide: Chromodomain-helicase-DNA-binding protein 3 (892 aa).

A compositionally biased stretch (basic and acidic residues) spans 1 to 20; that stretch reads MSSKRGADPDWKTPGKASKD. The segment at 1–29 is disordered; sequence MSSKRGADPDWKTPGKASKDKRPKTNAKK. The PHD-type zinc-finger motif lies at 35–82; that stretch reads EEYCKVCSDGGDLLCCDSCPSVYHRTCLSPPLKSIPKGDWICPRCIPL. Chromo domains lie at 84–156 and 179–240; these read GKAE…PSLE and LLVQ…GRQR. The Helicase ATP-binding domain occupies 279 to 458; the sequence is RYSWGQGIPT…FHLLNFLSSG (180 aa). 292-299 lines the ATP pocket; sequence DEMGLGKT. Residues 409–412 carry the DEAH box motif; that stretch reads DEAH. The 150-residue stretch at 590–739 folds into the Helicase C-terminal domain; sequence LLSKMLKQLK…LTHLVVRPGM (150 aa). A disordered region spans residues 839–892; sequence SQPKLPKKQKKQSQQSQVDVESIMGKGKRIRKEIDYSNQYPSPNRATPSSIVLM. The span at 874–892 shows a compositional bias: polar residues; that stretch reads YSNQYPSPNRATPSSIVLM.

It belongs to the SNF2/RAD54 helicase family. As to quaternary structure, monomer.

It localises to the nucleus. The protein localises to the chromosome. It catalyses the reaction ATP + H2O = ADP + phosphate + H(+). With respect to regulation, ATPase activity is stimulated by binding to DNA or nucleosomes, but is strongly activated by nucleosomes. ATP-dependent chromatin-remodeling factor which acts in nucleosome-remodeling by catalyzing ATP-dependent nucleosome mobilization. Likely to be involved in the regulation of transcription. This is Chromodomain-helicase-DNA-binding protein 3 from Drosophila melanogaster (Fruit fly).